A 243-amino-acid polypeptide reads, in one-letter code: Nuclear ubiquitous casein and cyclin-dependent kinase substrate 1 (243 aa).

Positions 1 to 243 (MSRPVRNRKV…SEDEAASGED (243 aa)) are disordered. Tyrosine 13 is modified (phosphotyrosine). Phosphoserine occurs at positions 14 and 19. Position 26 is a phosphotyrosine (tyrosine 26). A compositionally biased stretch (basic residues) spans 35–51 (KKIRSSPREAKNKRRSG). Residues serine 54, serine 58, serine 61, serine 73, serine 75, and serine 79 each carry the phosphoserine modification. Positions 64–77 (KDVKTKKDDSHSAE) are enriched in basic and acidic residues. Positions 91-100 (QQRQAASKAA) are enriched in low complexity. The segment covering 111–124 (VGSEEEPEEDDEAP) has biased composition (acidic residues). Residues serine 113, serine 130, serine 132, and serine 144 each carry the phosphoserine modification. Residues 132-145 (SDEDFLMEDDDDSD) are compositionally biased toward acidic residues. Basic residues predominate over residues 149–174 (SKKKNKKMVKKSKPERKEKKMPKPRL). Threonine 179 is subject to Phosphothreonine. At serine 181 the chain carries Phosphoserine. Residues 197–206 (TSKEKTPSPK) are compositionally biased toward basic and acidic residues. Threonine 202 carries the phosphothreonine modification. A phosphoserine mark is found at serine 204, serine 214, serine 223, serine 229, serine 234, and serine 240. The span at 232–243 (EGSEDEAASGED) shows a compositional bias: acidic residues.

In terms of assembly, does not interact with RAD51. In terms of processing, phosphorylated in an ATM-dependent manner in response to DNA damage. Phosphorylated by CDK1 and casein kinase.

It is found in the nucleus. The protein resides in the chromosome. Its function is as follows. Chromatin-associated protein involved in DNA repair by promoting homologous recombination (HR). Binds double-stranded DNA (dsDNA) and secondary DNA structures, such as D-loop structures, but with less affinity than RAD51AP1. This is Nuclear ubiquitous casein and cyclin-dependent kinase substrate 1 from Rattus norvegicus (Rat).